A 340-amino-acid chain; its full sequence is Fructose import permease protein FruG (340 aa).

A run of 9 helical transmembrane segments spans residues I23–F43, L49–M69, I73–G93, V101–A121, M130–I150, L182–L202, I234–I254, V273–G293, and F307–V327.

It belongs to the binding-protein-dependent transport system permease family. The complex is composed of an ATP-binding protein (FruK), two transmembrane proteins (FruF and FruG) and a solute-binding protein (FruE).

Its subcellular location is the cell membrane. Its function is as follows. Part of the high-affinity ABC transporter complex FruEKFG involved in fructose uptake. Can also transport ribose and xylose, with lower affinity. Probably responsible for the translocation of the substrate across the membrane. The polypeptide is Fructose import permease protein FruG (Bifidobacterium longum (strain NCC 2705)).